We begin with the raw amino-acid sequence, 282 residues long: tRNA uridine(34) hydroxylase (282 aa).

The Rhodanese domain occupies 128–222 (EGRPVVMLDT…YFEEVGGSHY (95 aa)). Cys182 functions as the Cysteine persulfide intermediate in the catalytic mechanism.

The protein belongs to the TrhO family.

The catalysed reaction is uridine(34) in tRNA + AH2 + O2 = 5-hydroxyuridine(34) in tRNA + A + H2O. Its function is as follows. Catalyzes oxygen-dependent 5-hydroxyuridine (ho5U) modification at position 34 in tRNAs. The polypeptide is tRNA uridine(34) hydroxylase (Cupriavidus taiwanensis (strain DSM 17343 / BCRC 17206 / CCUG 44338 / CIP 107171 / LMG 19424 / R1) (Ralstonia taiwanensis (strain LMG 19424))).